Consider the following 232-residue polypeptide: 2,3,4,5-tetrahydropyridine-2,6-dicarboxylate N-acetyltransferase (232 aa).

It belongs to the transferase hexapeptide repeat family. DapH subfamily.

It catalyses the reaction (S)-2,3,4,5-tetrahydrodipicolinate + acetyl-CoA + H2O = L-2-acetamido-6-oxoheptanedioate + CoA. It functions in the pathway amino-acid biosynthesis; L-lysine biosynthesis via DAP pathway; LL-2,6-diaminopimelate from (S)-tetrahydrodipicolinate (acetylase route): step 1/3. In terms of biological role, catalyzes the transfer of an acetyl group from acetyl-CoA to tetrahydrodipicolinate. This chain is 2,3,4,5-tetrahydropyridine-2,6-dicarboxylate N-acetyltransferase, found in Streptococcus thermophilus (strain CNRZ 1066).